A 243-amino-acid polypeptide reads, in one-letter code: Pyridoxine 5'-phosphate synthase (243 aa).

Position 6 (Asn6) interacts with 3-amino-2-oxopropyl phosphate. 8-9 (DH) is a 1-deoxy-D-xylulose 5-phosphate binding site. 3-amino-2-oxopropyl phosphate is bound at residue Arg17. Residue His42 is the Proton acceptor of the active site. 1-deoxy-D-xylulose 5-phosphate-binding residues include Arg44 and His49. Glu72 serves as the catalytic Proton acceptor. 1-deoxy-D-xylulose 5-phosphate is bound at residue Thr102. Catalysis depends on His192, which acts as the Proton donor. 3-amino-2-oxopropyl phosphate is bound by residues Gly193 and 214 to 215 (GH).

Belongs to the PNP synthase family. In terms of assembly, homooctamer; tetramer of dimers.

The protein localises to the cytoplasm. It carries out the reaction 3-amino-2-oxopropyl phosphate + 1-deoxy-D-xylulose 5-phosphate = pyridoxine 5'-phosphate + phosphate + 2 H2O + H(+). It participates in cofactor biosynthesis; pyridoxine 5'-phosphate biosynthesis; pyridoxine 5'-phosphate from D-erythrose 4-phosphate: step 5/5. Functionally, catalyzes the complicated ring closure reaction between the two acyclic compounds 1-deoxy-D-xylulose-5-phosphate (DXP) and 3-amino-2-oxopropyl phosphate (1-amino-acetone-3-phosphate or AAP) to form pyridoxine 5'-phosphate (PNP) and inorganic phosphate. The polypeptide is Pyridoxine 5'-phosphate synthase (Sulfurihydrogenibium sp. (strain YO3AOP1)).